A 434-amino-acid chain; its full sequence is MAKTDIARRVYNHAWKLDPIVRSLLDTDFYKLLMLQMIWGLYPKVDATFSLINRTTSVRLADEIDEGELRAQLDHARTLRFSKKEMIWLAGNSFYGRKQIFQPEFLNWLHDFQLPEYDLRRKDGQYELHFHGPWSHTTMWEIPALAIINELRSRAAMKNLGPFSLDVLYARAKAKMWSKVERLRQLPGLKISDFGTRRRHSFLWQRWCVEALKEGIGDAFTGTSNVLLAMDTDLEALGTNAHELPMVLAALAKNDEELRSAPYRVLQDWNRYYGGNLLIVLPDAFGTAAFLRNAPDWVADWTGFRPDSAPPIEGGERIIEWWKSRGKDPREKLLIFSDALDVDTIEETYRHFEGRVRMSFGWGTNLTNDFAGCAPKEIEGLNAISLVCKVTDANGHPAVKLSDNPQKATGDPKEVARYLKFFGNEERVEQLVRV.

Position 242 is a phosphohistidine; by autocatalysis (His-242).

It belongs to the NAPRTase family. Transiently phosphorylated on a His residue during the reaction cycle. Phosphorylation strongly increases the affinity for substrates and increases the rate of nicotinate D-ribonucleotide production. Dephosphorylation regenerates the low-affinity form of the enzyme, leading to product release.

It carries out the reaction nicotinate + 5-phospho-alpha-D-ribose 1-diphosphate + ATP + H2O = nicotinate beta-D-ribonucleotide + ADP + phosphate + diphosphate. It functions in the pathway cofactor biosynthesis; NAD(+) biosynthesis; nicotinate D-ribonucleotide from nicotinate: step 1/1. In terms of biological role, catalyzes the synthesis of beta-nicotinate D-ribonucleotide from nicotinate and 5-phospho-D-ribose 1-phosphate at the expense of ATP. The sequence is that of Nicotinate phosphoribosyltransferase from Brucella anthropi (strain ATCC 49188 / DSM 6882 / CCUG 24695 / JCM 21032 / LMG 3331 / NBRC 15819 / NCTC 12168 / Alc 37) (Ochrobactrum anthropi).